Reading from the N-terminus, the 494-residue chain is Protein DETOXIFICATION 22 (494 aa).

The next 12 helical transmembrane spans lie at 40-60, 78-98, 123-143, 159-179, 188-208, 217-237, 268-288, 299-319, 340-360, 384-404, 416-436, and 441-461; these read LWVV…VSLV, ITFT…ASAL, IVLT…GPIL, IALW…CQIF, IIAY…WLLV, GAMT…LLYV, GGMV…TGNL, AICI…LAAV, IVAV…FLFL, LLAF…VAVG, LACY…VVGL, and VWIG…IMTL.

This sequence belongs to the multi antimicrobial extrusion (MATE) (TC 2.A.66.1) family.

It localises to the membrane. This is Protein DETOXIFICATION 22 from Arabidopsis thaliana (Mouse-ear cress).